Reading from the N-terminus, the 375-residue chain is Methylthioribose-1-phosphate isomerase (375 aa).

The active-site Proton donor is the Asp-259.

Belongs to the eIF-2B alpha/beta/delta subunits family. MtnA subfamily.

Its subcellular location is the cytoplasm. It is found in the nucleus. It catalyses the reaction 5-(methylsulfanyl)-alpha-D-ribose 1-phosphate = 5-(methylsulfanyl)-D-ribulose 1-phosphate. It participates in amino-acid biosynthesis; L-methionine biosynthesis via salvage pathway; L-methionine from S-methyl-5-thio-alpha-D-ribose 1-phosphate: step 1/6. Catalyzes the interconversion of methylthioribose-1-phosphate (MTR-1-P) into methylthioribulose-1-phosphate (MTRu-1-P). The sequence is that of Methylthioribose-1-phosphate isomerase from Populus trichocarpa (Western balsam poplar).